Here is a 189-residue protein sequence, read N- to C-terminus: GTPase NRas (189 aa).

A GTP-binding site is contributed by 10–17; that stretch reads GAGGVGKS. The short motif at 32-40 is the Effector region element; that stretch reads YDPTIEDSY. Residues 57 to 61 and 116 to 119 each bind GTP; these read DTAGQ and NKCD. A hypervariable region region spans residues 166–185; it reads YRMKKLNSNEDGNQGCMGLS. Cys181 carries the S-palmitoyl cysteine lipid modification. The S-farnesyl cysteine moiety is linked to residue Cys186. A propeptide spans 187 to 189 (removed in mature form); sequence IVM.

This sequence belongs to the small GTPase superfamily. Ras family. Palmitoylated by the ZDHHC9-GOLGA7 complex. Depalmitoylated by ABHD17A, ABHD17B and ABHD17C. A continuous cycle of de- and re-palmitoylation regulates rapid exchange between plasma membrane and Golgi.

It localises to the cell membrane. Its subcellular location is the golgi apparatus membrane. It catalyses the reaction GTP + H2O = GDP + phosphate + H(+). Alternates between an inactive form bound to GDP and an active form bound to GTP. Activated by a guanine nucleotide-exchange factor (GEF) and inactivated by a GTPase-activating protein (GAP). Its function is as follows. Ras proteins bind GDP/GTP and possess intrinsic GTPase activity. In Gallus gallus (Chicken), this protein is GTPase NRas (NRAS).